The following is a 291-amino-acid chain: Mitochondrial citrate transporter B (291 aa).

Solcar repeat units follow at residues 10-97, 105-193, and 201-283; these read PQKW…IKNS, LSPA…LKES, and PTLF…MTYL. 6 helical membrane-spanning segments follow: residues 16–36, 74–94, 112–132, 172–192, 203–220, and 255–276; these read LIAGGVAGGVEAASTYPFEYA, STLIIGTTAKAAVRFVSYDTI, VAGVVAGATESVLAVTPTERI, TTLKQSATSAVRMGTYNILKE, LFTTFCMGALAGVVTVYA, and FWKGSSMRLGRLLLSGGIVFSV.

Belongs to the mitochondrial carrier (TC 2.A.29) family.

The protein resides in the mitochondrion inner membrane. It carries out the reaction citrate(in) + H(+)(in) = citrate(out) + H(+)(out). Functionally, mitochondrial transporter that mediates citrate export from mitochondria to cytoplasm. Both ctpA, ctpB, and ctpD play important roles in citric acid transport across the mitochondrial membrane and function in a redundant manner. The polypeptide is Mitochondrial citrate transporter B (Aspergillus niger (strain ATCC 1015 / CBS 113.46 / FGSC A1144 / LSHB Ac4 / NCTC 3858a / NRRL 328 / USDA 3528.7)).